The sequence spans 246 residues: MAGKEVIFIMALFIAVESSPIFSFDDLVCPSVTSLRVNVEKNECSTKKDCGRNLCCENQNKINVCVGGIMPLPKPNLDVNNIGGAVSESVKQKRETAESLSGSFDKEKASAENLSGSFDQQKSSVDEKSGSVGQQKGAVEGQSGSGEQRRETAESQSGSVDQEKASAENLSGSIDKQKVTVEEKSEPAQGQSGSVKQKRKTTENVSGSLDQEKASAESLSGSFDQQKSSVDEKSGSVGNDDDISVQ.

Residues 1–20 (MAGKEVIFIMALFIAVESSP) form the signal peptide. Tandem repeats lie at residues 83-96 (GGAVSESVKQKRET), 97-110 (AESLSGSFDKEKAS), 111-124 (AENLSGSFDQQKSS), 125-138 (VDEKSGSVGQQKGA), 139-152 (VEGQSGSGEQRRET), 153-166 (AESQSGSVDQEKAS), and 167-180 (AENLSGSIDKQKVT). The tract at residues 83 to 243 (GGAVSESVKQ…SGSVGNDDDI (161 aa)) is 12 X approximate tandem repeats of [AV][DE]X[VL]SGSX[DE]QX[KR]X[ST]. A disordered region spans residues 88–246 (ESVKQKRETA…VGNDDDISVQ (159 aa)). Polar residues predominate over residues 112–123 (ENLSGSFDQQKS). The segment covering 175–186 (DKQKVTVEEKSE) has biased composition (basic and acidic residues). One copy of the 8; half-length repeat lies at 181–187 (VEEKSEP). 4 repeat units span residues 188 to 201 (AQGQSGSVKQKRKT), 202 to 215 (TENVSGSLDQEKAS), 216 to 229 (AESLSGSFDQQKSS), and 230 to 243 (VDEKSGSVGNDDDI). Over residues 217-228 (ESLSGSFDQQKS) the composition is skewed to polar residues.

Expressed by the venom gland.

The protein localises to the secreted. This chain is 33kDa venom protein, found in Chelonus sp. nr. curvimaculatus (Parasitic wasp).